A 113-amino-acid polypeptide reads, in one-letter code: U11-theraphotoxin-Hhn1k (113 aa).

An N-terminal signal peptide occupies residues Met-1–Ala-21. Positions Asp-22–Arg-74 are excised as a propeptide. Residues Glu-61 to Asp-83 form a disordered region. Disulfide bonds link Cys-75–Cys-90, Cys-82–Cys-95, and Cys-89–Cys-110.

The protein belongs to the neurotoxin 14 (magi-1) family. 01 (HNTX-16) subfamily. In terms of tissue distribution, expressed by the venom gland.

It is found in the secreted. Functionally, probable ion channel inhibitor. The polypeptide is U11-theraphotoxin-Hhn1k (Cyriopagopus hainanus (Chinese bird spider)).